A 225-amino-acid polypeptide reads, in one-letter code: MTKNIVITVDGPSGAGKGTLCYALANRLGFALLDSGAIYRVTALAALQCKADLTNEAELAELAAHLDIEFLPEAGEVKVMLGGEDVSGLIRTQEVADAASKVAVFPQVRSALLQLQKDFATPKGLIADGRDMGTVVFPTAQVKLFLDASAEERAKRRFKQLQNKGISGNFDQILAEIKDRDFRDRNRPVAPLKPADDALLLDSTTLSIEEVIAQALSYIHQKVKI.

11–19 (GPSGAGKGT) lines the ATP pocket.

This sequence belongs to the cytidylate kinase family. Type 1 subfamily.

The protein resides in the cytoplasm. It carries out the reaction CMP + ATP = CDP + ADP. The catalysed reaction is dCMP + ATP = dCDP + ADP. The chain is Cytidylate kinase from Mannheimia succiniciproducens (strain KCTC 0769BP / MBEL55E).